Consider the following 590-residue polypeptide: Leucine-rich repeat transmembrane neuronal protein 4 (590 aa).

The N-terminal stretch at 1 to 30 (MGFRLITQLKGMSVFLVLFPTLLLVMLTGA) is a signal peptide. One can recognise an LRRNT domain in the interval 31–61 (QRACPKNCRCDGKIVYCESHAFADIPENISG). At 31 to 424 (QRACPKNCRC…HEYEHVSFHK (394 aa)) the chain is on the extracellular side. The N-linked (GlcNAc...) asparagine glycan is linked to Asn58. 10 LRR repeats span residues 62–83 (GSQG…QFAG), 86–107 (QLIW…AFQG), 110–131 (RLKE…TFHP), 134–155 (NLRN…QFKG), 158–179 (KLII…VFQD), 182–203 (NLDF…AFAG), 206–226 (KLKE…AHFP), 230–251 (NLRS…LTWT), 254–275 (SLHT…TFKC), and 278–299 (NLQK…TVNA). Residue Asn126 is glycosylated (N-linked (GlcNAc...) asparagine). An N-linked (GlcNAc...) asparagine glycan is attached at Asn291. Residues 311 to 362 (NMWECSRSICPLFYWLKNFKGNKESTMICAGPKHIQGEKVSDAVETYNICSD) form the LRRCT domain. Residues 425 to 445 (IIAGSVALFLSVAMILLVIYV) traverse the membrane as a helical segment. At 446–590 (SWKRYPASMK…PAIYLERITN (145 aa)) the chain is on the cytoplasmic side.

This sequence belongs to the LRRTM family. In terms of assembly, peripherally associated with AMPAR complex. AMPAR complex consists of an inner core made of 4 pore-forming GluA/GRIA proteins (GRIA1, GRIA2, GRIA3 and GRIA4) and 4 major auxiliary subunits arranged in a twofold symmetry. One of the two pairs of distinct binding sites is occupied either by CNIH2, CNIH3 or CACNG2, CACNG3. The other harbors CACNG2, CACNG3, CACNG4, CACNG8 or GSG1L. This inner core of AMPAR complex is complemented by outer core constituents binding directly to the GluA/GRIA proteins at sites distinct from the interaction sites of the inner core constituents. Outer core constituents include at least PRRT1, PRRT2, CKAMP44/SHISA9, FRRS1L and NRN1. The proteins of the inner and outer core serve as a platform for other, more peripherally associated AMPAR constituents, including LRRTM4. Alone or in combination, these auxiliary subunits control the gating and pharmacology of the AMPAR complex and profoundly impact their biogenesis and protein processing. As to expression, predominantly in the brain (at protein level). Also expressed in the cerebellum and other tissues.

Its subcellular location is the cell membrane. The protein localises to the postsynaptic cell membrane. May play a role in the development and maintenance of the vertebrate nervous system. Exhibits strong synaptogenic activity, restricted to excitatory presynaptic differentiation. The chain is Leucine-rich repeat transmembrane neuronal protein 4 (Lrrtm4) from Mus musculus (Mouse).